A 558-amino-acid chain; its full sequence is S-layer protein (558 aa).

The N-terminal stretch at 1-28 (MAMSLKKIGAIAVGGAMVATALASGVAA) is a signal peptide. N-linked (GlcNAc...) asparagine glycans are attached at residues Asn112, Asn138, Asn158, Asn197, Asn226, Asn291, and Asn374.

Belongs to the Mj S-layer protein family.

It localises to the secreted. The protein localises to the cell wall. The protein resides in the S-layer. Functionally, S-layer protein. The S-layer is a paracrystalline mono-layered assembly of proteins which coat the surface of the cell. This is S-layer protein (sla) from Methanocaldococcus jannaschii (strain ATCC 43067 / DSM 2661 / JAL-1 / JCM 10045 / NBRC 100440) (Methanococcus jannaschii).